A 259-amino-acid chain; its full sequence is Peroxisomal membrane protein 11B (259 aa).

K43 is subject to N6-acetyllysine. Positions 211-259 (VVRNACDLFIPLDKLGLWRCGPGIVGLCGLVSSILSILTLIYPWLRLKP) are interaction with PEX19, PEX11G and FIS1 and peroxisome targeting. The helical transmembrane segment at 234-254 (IVGLCGLVSSILSILTLIYPW) threads the bilayer.

The protein belongs to the peroxin-11 family. Homodimer. Heterodimer with PEX11G. Interacts with PEX19. Interacts with FIS1.

The protein resides in the peroxisome membrane. Its function is as follows. Involved in peroxisomal proliferation. May regulate peroxisome division by recruiting the dynamin-related GTPase DNM1L to the peroxisomal membrane. Promotes membrane protrusion and elongation on the peroxisomal surface. This chain is Peroxisomal membrane protein 11B (PEX11B), found in Pongo abelii (Sumatran orangutan).